A 378-amino-acid polypeptide reads, in one-letter code: Chaperone protein DnaJ (378 aa).

A J domain is found at 5-70 (DYYEVLSVSR…DKKAAYDQFG (66 aa)). The CR-type zinc finger occupies 133 to 211 (GLTKELRIPT…CHGEGRVEKS (79 aa)). Residues C146, C149, C163, C166, C185, C188, C199, and C202 each contribute to the Zn(2+) site. 4 CXXCXGXG motif repeats span residues 146-153 (CDSCDGSG), 163-170 (CGTCHGQG), 185-192 (CPTCHGRG), and 199-206 (CNKCHGEG).

It belongs to the DnaJ family. As to quaternary structure, homodimer. It depends on Zn(2+) as a cofactor.

It localises to the cytoplasm. In terms of biological role, participates actively in the response to hyperosmotic and heat shock by preventing the aggregation of stress-denatured proteins and by disaggregating proteins, also in an autonomous, DnaK-independent fashion. Unfolded proteins bind initially to DnaJ; upon interaction with the DnaJ-bound protein, DnaK hydrolyzes its bound ATP, resulting in the formation of a stable complex. GrpE releases ADP from DnaK; ATP binding to DnaK triggers the release of the substrate protein, thus completing the reaction cycle. Several rounds of ATP-dependent interactions between DnaJ, DnaK and GrpE are required for fully efficient folding. Also involved, together with DnaK and GrpE, in the DNA replication of plasmids through activation of initiation proteins. The chain is Chaperone protein DnaJ from Shewanella sediminis (strain HAW-EB3).